The chain runs to 909 residues: SCY1-like protein 2 B (909 aa).

Residues 39 to 343 (YELLDQIGSA…ALDFTGSNFF (305 aa)) form the Protein kinase domain. HEAT repeat units follow at residues 311–348 (SIPS…SDAR), 350–382 (RALR…DFDS), 383–401 (RVLR…RNLV), 402–439 (LQPI…TASG), 465–502 (VLPL…VVRQ), 499–537 (VVRQ…TLDK), and 578–617 (FTAE…KIEE). Disordered regions lie at residues 624 to 772 (NDSG…VAST) and 804 to 909 (SASL…LDLL). Composition is skewed to polar residues over residues 638-648 (NGLQFQSSTQI), 678-712 (PASS…TAPT), 724-747 (RQSS…TSFA), 804-828 (SASL…QDPL), and 835-852 (KQSQ…NNQK).

It belongs to the protein kinase superfamily. As to quaternary structure, interacts with VTI11, VTI12 and CHC1. In terms of tissue distribution, expressed in roots, seedlings, leaves, stems, flowers, and, at low levels, in siliques.

Its subcellular location is the golgi apparatus membrane. It is found in the golgi apparatus. It localises to the trans-Golgi network membrane. The protein localises to the prevacuolar compartment membrane. In terms of biological role, probably inactive kinase. Component of the AP2-containing clathrin coat that regulates clathrin-dependent trafficking at plasma membrane, TGN and endosomal system. Together with SCYL2B, required for cell growth, plant growth and development. Essential for polarized root hair development probably by mediating the root hair tip localization of cellulose synthase-like D3 (CSLD3). This is SCY1-like protein 2 B from Arabidopsis thaliana (Mouse-ear cress).